We begin with the raw amino-acid sequence, 304 residues long: Non-specific ribonucleoside hydrolase RihC (304 aa).

His235 is a catalytic residue.

This sequence belongs to the IUNH family. RihC subfamily.

In terms of biological role, hydrolyzes both purine and pyrimidine ribonucleosides with a broad-substrate specificity. The protein is Non-specific ribonucleoside hydrolase RihC of Salmonella paratyphi A (strain ATCC 9150 / SARB42).